Reading from the N-terminus, the 549-residue chain is Probable amidase (549 aa).

Residues Lys132 and Ser209 each act as charge relay system in the active site. Ser233 functions as the Acyl-ester intermediate in the catalytic mechanism.

This sequence belongs to the amidase family.

It carries out the reaction a monocarboxylic acid amide + H2O = a monocarboxylate + NH4(+). The chain is Probable amidase (AMD2) from Saccharomyces cerevisiae (strain ATCC 204508 / S288c) (Baker's yeast).